Reading from the N-terminus, the 382-residue chain is Galactokinase (382 aa).

Position 34-37 (34-37 (EHTD)) interacts with substrate. ATP is bound at residue 124 to 130 (GAGLSSS). Mg(2+) is bound by residues serine 130 and glutamate 162. Residue aspartate 174 is the Proton acceptor of the active site. A substrate-binding site is contributed by tyrosine 223.

It belongs to the GHMP kinase family. GalK subfamily.

Its subcellular location is the cytoplasm. The catalysed reaction is alpha-D-galactose + ATP = alpha-D-galactose 1-phosphate + ADP + H(+). Its pathway is carbohydrate metabolism; galactose metabolism. Functionally, catalyzes the transfer of the gamma-phosphate of ATP to D-galactose to form alpha-D-galactose-1-phosphate (Gal-1-P). The chain is Galactokinase from Shigella flexneri.